Reading from the N-terminus, the 230-residue chain is Claudin-2 (230 aa).

The Cytoplasmic portion of the chain corresponds to 1 to 7 (MASLGVQ). The chain crosses the membrane as a helical span at residues 8–28 (LVGYILGLLGLLGTSIAMLLP). At 29–81 (NWRTSSYVGASIVTAVGFSKGLWMECATHSTGITQCDIYSTLLGLPADIQAAQ) the chain is on the extracellular side. Residues cysteine 54 and cysteine 64 are joined by a disulfide bond. The chain crosses the membrane as a helical span at residues 82–102 (AMMVTSSAMSSLACIISVVGM). Topologically, residues 103 to 116 (RCTVFCQDSRAKDR) are cytoplasmic. The helical transmembrane segment at 117 to 137 (VAVVGGVFFILGGILGFIPVA) threads the bilayer. The Extracellular segment spans residues 138-162 (WNLHGILRDFYSPLVPDSMKFEIGE). Residues 163-183 (ALYLGIISALFSLVAGVILCF) traverse the membrane as a helical segment. Over 184–230 (SCSPQGNRTNYYDGYQAQPLATRSSPRSAQQPKAKSEFNSYSLTGYV) the chain is Cytoplasmic. Positions 205–230 (TRSSPRSAQQPKAKSEFNSYSLTGYV) are disordered. Lysine 218 is covalently cross-linked (Glycyl lysine isopeptide (Lys-Gly) (interchain with G-Cter in SUMO)). Residues serine 219 and serine 223 each carry the phosphoserine modification. The interval 229–230 (YV) is interactions with TJP1, TJP2 and TJP3.

It belongs to the claudin family. As to quaternary structure, can form homo- and heteropolymers with other claudins to mediate paracellular barrier and channel functions of tight junctions in response to physiological stimuli. Homopolymers interact with CLDN3, but not CLDN1, homopolymers. Directly interacts with TJP1/ZO-1, TJP2/ZO-2 and TJP3/ZO-3. Post-translationally, the disulfide bond is necessary for pore formation, but is not required for correct protein trafficking. Expressed in the kidney, liver and intestine, with higher levels in the ileum than in the jejunum. Low levels in the brain. Expressed in colonic epithelium (at protein level). Expressed in the perivenous regions, bile ducts, and gallbladder epithelium (at protein level).

It is found in the cell junction. Its subcellular location is the tight junction. The protein localises to the cell membrane. The catalysed reaction is Na(+)(in) = Na(+)(out). It catalyses the reaction K(+)(in) = K(+)(out). It carries out the reaction Rb(+)(in) = Rb(+)(out). The enzyme catalyses Li(+)(in) = Li(+)(out). The catalysed reaction is Cs(+)(in) = Cs(+)(out). It catalyses the reaction Ca(2+)(in) = Ca(2+)(out). It carries out the reaction methylamine(out) = methylamine(in). The enzyme catalyses choline(out) = choline(in). The catalysed reaction is H2O(in) = H2O(out). The channel permeability is down-regulated at acidic pH. In terms of biological role, forms paracellular channels: polymerizes in tight junction strands with cation- and water-selective channels through the strands, conveying epithelial permeability in a process known as paracellular tight junction permeability. In intestinal epithelium, allows for sodium and water fluxes from the peritoneal side to the lumen of the intestine to regulate nutrient absorption and clear enteric pathogens as part of mucosal immune response. In kidney, allows passive sodium and calcium reabsorption across proximal tubules from the lumen back to the bloodstream. In the hepatobiliary tract, allows paracellular water and cation fluxes in the hepatic perivenous areas and biliary epithelium to generate bile flow and maintain osmotic gradients. This is Claudin-2 from Mus musculus (Mouse).